A 1009-amino-acid chain; its full sequence is DNA ligase 4 (1009 aa).

2 disordered regions span residues 1-34 (METD…APTL) and 51-72 (KKKP…LSAA). The span at 51 to 65 (KKKPVGPAGNRRKAG) shows a compositional bias: basic residues. Glu-315, Lys-317, Leu-318, Arg-322, Glu-384, Phe-424, Glu-484, Lys-489, Lys-506, and Lys-508 together coordinate ATP. The active-site N6-AMP-lysine intermediate is Lys-317. Glu-384 contacts Mg(2+). Mg(2+) is bound at residue Glu-484. BRCT domains lie at 715–808 (PSGH…PDLL) and 887–995 (PCGW…QHMP).

It belongs to the ATP-dependent DNA ligase family. It depends on Mg(2+) as a cofactor.

The protein localises to the nucleus. It catalyses the reaction ATP + (deoxyribonucleotide)n-3'-hydroxyl + 5'-phospho-(deoxyribonucleotide)m = (deoxyribonucleotide)n+m + AMP + diphosphate.. In terms of biological role, DNA ligase involved in DNA non-homologous end joining (NHEJ); required for double-strand break (DSB) repair. This chain is DNA ligase 4 (lig4), found in Emericella nidulans (strain FGSC A4 / ATCC 38163 / CBS 112.46 / NRRL 194 / M139) (Aspergillus nidulans).